Consider the following 122-residue polypeptide: Large ribosomal subunit protein eL22B (122 aa).

Belongs to the eukaryotic ribosomal protein eL22 family. In terms of assembly, component of the large ribosomal subunit (LSU). Mature yeast ribosomes consist of a small (40S) and a large (60S) subunit. The 40S small subunit contains 1 molecule of ribosomal RNA (18S rRNA) and 33 different proteins (encoded by 57 genes). The large 60S subunit contains 3 rRNA molecules (25S, 5.8S and 5S rRNA) and 46 different proteins (encoded by 81 genes).

It localises to the cytoplasm. Component of the ribosome, a large ribonucleoprotein complex responsible for the synthesis of proteins in the cell. The small ribosomal subunit (SSU) binds messenger RNAs (mRNAs) and translates the encoded message by selecting cognate aminoacyl-transfer RNA (tRNA) molecules. The large subunit (LSU) contains the ribosomal catalytic site termed the peptidyl transferase center (PTC), which catalyzes the formation of peptide bonds, thereby polymerizing the amino acids delivered by tRNAs into a polypeptide chain. The nascent polypeptides leave the ribosome through a tunnel in the LSU and interact with protein factors that function in enzymatic processing, targeting, and the membrane insertion of nascent chains at the exit of the ribosomal tunnel. This Saccharomyces cerevisiae (strain ATCC 204508 / S288c) (Baker's yeast) protein is Large ribosomal subunit protein eL22B.